The following is a 315-amino-acid chain: Replication factor C small subunit (315 aa).

43-50 (GSPGVGKT) serves as a coordination point for ATP.

Belongs to the activator 1 small subunits family. RfcS subfamily. As to quaternary structure, heteromultimer composed of small subunits (RfcS) and large subunits (RfcL).

Functionally, part of the RFC clamp loader complex which loads the PCNA sliding clamp onto DNA. This Methanococcus maripaludis (strain C7 / ATCC BAA-1331) protein is Replication factor C small subunit.